Consider the following 1684-residue polypeptide: GRIP and coiled-coil domain-containing protein 2 (1684 aa).

Position 1 is an N-acetylmethionine (Met-1). Residues 1–22 (MEDLVQDGVASPATPGTGKSKL) form a disordered region. Ser-11 bears the Phosphoserine mark. A Phosphothreonine modification is found at Thr-14. The stretch at 110–1618 (VTKMGDAHKE…REKSAANLEY (1509 aa)) forms a coiled coil. A phosphoserine mark is found at Ser-236, Ser-1483, and Ser-1487. A disordered region spans residues 1475–1502 (LKNEPTTRSPVSSQQSLKNLRERRNTDL). Over residues 1477 to 1492 (NEPTTRSPVSSQQSLK) the composition is skewed to polar residues. The tract at residues 1574-1613 (HLNGLLRETEATNAILMEQIKLLKSEIRRLERNQEREKSA) is mediates interaction with RAB6A. The tract at residues 1574–1684 (HLNGLLRETE…SYLHSWSGLR (111 aa)) is mediates interaction with RAB9A. A GRIP domain is found at 1609–1659 (REKSAANLEYLKNVLLQFIFLKPGSERERLLPVINTMLQLSPEEKGKLAAV).

Homodimer. Interacts (via GRIP domain) with RAB6A (preferentially in its GTP-bound form). May interact (RAB6A-dependent) with ARL1; according to PubMed:19703403, RAB6A and ARL1 are not involved in GCC2 Golgi localization as proposed by PubMed:18243103. Interacts (probably via GRIP domain) with RAB9A (preferentially in its GTP-bound form). Interacts with CLASP1 and CLASP2; recruits both proteins to membranes of the TGN. Interacts with STX16. In terms of tissue distribution, ubiquitous.

It is found in the cytoplasm. The protein localises to the golgi apparatus. The protein resides in the trans-Golgi network membrane. Functionally, golgin which probably tethers transport vesicles to the trans-Golgi network (TGN) and regulates vesicular transport between the endosomes and the Golgi. As a RAB9A effector it is involved in recycling of the mannose 6-phosphate receptor from the late endosomes to the TGN. May also play a role in transport between the recycling endosomes and the Golgi. Required for maintenance of the Golgi structure, it is involved in the biogenesis of noncentrosomal, Golgi-associated microtubules through recruitment of CLASP1 and CLASP2. The protein is GRIP and coiled-coil domain-containing protein 2 (GCC2) of Homo sapiens (Human).